The sequence spans 73 residues: Putative membrane protein insertion efficiency factor (73 aa).

This sequence belongs to the UPF0161 family.

It localises to the cell inner membrane. Its function is as follows. Could be involved in insertion of integral membrane proteins into the membrane. The polypeptide is Putative membrane protein insertion efficiency factor (Bacteroides fragilis (strain ATCC 25285 / DSM 2151 / CCUG 4856 / JCM 11019 / LMG 10263 / NCTC 9343 / Onslow / VPI 2553 / EN-2)).